The sequence spans 136 residues: Classical arabinogalactan protein 11 (136 aa).

Residues 1–20 (MARLFVVVALLALAVGTVFA) form the signal peptide. Low complexity-rich tracts occupy residues 24-56 (PSAA…ASSP), 68-81 (SAAS…APTV), and 89-107 (PEAD…PAAA). Residues 24–115 (PSAAPTASPT…AAESPKSGAT (92 aa)) are disordered. A lipid anchor (GPI-anchor amidated serine) is attached at S112. Positions 113–136 (GATTNVKLSIAGTVAAAGFFIFSL) are cleaved as a propeptide — removed in mature form.

The protein belongs to the classical AGP family. O-glycosylated on the hydroxyproline residues.

The protein resides in the cell membrane. Functionally, proteoglycan that seems to be implicated in diverse developmental roles such as differentiation, cell-cell recognition, embryogenesis and programmed cell death. This chain is Classical arabinogalactan protein 11 (AGP11), found in Arabidopsis thaliana (Mouse-ear cress).